Consider the following 459-residue polypeptide: Lipase 4 (459 aa).

The signal sequence occupies residues 1–14 (MLFLLFLLVAPIYA). A disulfide bond links cysteine 110 and cysteine 281. Catalysis depends on serine 194, which acts as the Charge relay system. Residues asparagine 229 and asparagine 266 are each glycosylated (N-linked (GlcNAc...) asparagine). Residues aspartate 343 and histidine 376 each act as charge relay system in the active site. An intrachain disulfide couples cysteine 359 to cysteine 404.

The protein belongs to the AB hydrolase superfamily. Lipase family. Class Lip subfamily.

It localises to the secreted. The catalysed reaction is a triacylglycerol + H2O = a diacylglycerol + a fatty acid + H(+). Functionally, secreted lipase that is able to hydrolyze both the neutral triacylglycerols and the monopalmitate ester Tween 40, allowing the use of hydrolyzed products as carbon sources. Has broad lipolytic activity, which may be important for colonization and subsequent infection, therefore contributing to the persistence and virulence in human tissue. The protein is Lipase 4 of Candida albicans (strain SC5314 / ATCC MYA-2876) (Yeast).